The primary structure comprises 501 residues: UDP-N-acetylmuramoyl-L-alanyl-D-glutamate--2,6-diaminopimelate ligase (501 aa).

UDP-N-acetyl-alpha-D-muramoyl-L-alanyl-D-glutamate is bound by residues Leu26, Ser28, and 43–45 (HQC). Residue 123-129 (GTNGKTT) participates in ATP binding. UDP-N-acetyl-alpha-D-muramoyl-L-alanyl-D-glutamate is bound by residues Asn164, 165–166 (TT), Ser192, Gln198, and Arg200. Lys232 carries the post-translational modification N6-carboxylysine. Meso-2,6-diaminopimelate contacts are provided by residues Arg398, 422–425 (DNPR), Gly473, and Glu477. A Meso-diaminopimelate recognition motif motif is present at residues 422–425 (DNPR).

Belongs to the MurCDEF family. MurE subfamily. Requires Mg(2+) as cofactor. Post-translationally, carboxylation is probably crucial for Mg(2+) binding and, consequently, for the gamma-phosphate positioning of ATP.

The protein localises to the cytoplasm. It catalyses the reaction UDP-N-acetyl-alpha-D-muramoyl-L-alanyl-D-glutamate + meso-2,6-diaminopimelate + ATP = UDP-N-acetyl-alpha-D-muramoyl-L-alanyl-gamma-D-glutamyl-meso-2,6-diaminopimelate + ADP + phosphate + H(+). It participates in cell wall biogenesis; peptidoglycan biosynthesis. In terms of biological role, catalyzes the addition of meso-diaminopimelic acid to the nucleotide precursor UDP-N-acetylmuramoyl-L-alanyl-D-glutamate (UMAG) in the biosynthesis of bacterial cell-wall peptidoglycan. This Haemophilus ducreyi (strain 35000HP / ATCC 700724) protein is UDP-N-acetylmuramoyl-L-alanyl-D-glutamate--2,6-diaminopimelate ligase.